The chain runs to 47 residues: Large ribosomal subunit protein bL33 (47 aa).

This sequence belongs to the bacterial ribosomal protein bL33 family.

This is Large ribosomal subunit protein bL33 from Staphylococcus saprophyticus.